Here is a 151-residue protein sequence, read N- to C-terminus: Metalloproteinase inhibitor 3 (151 aa).

An NTR domain is found at 1–108; sequence CNSDIVIRAK…GLNYRYHLGC (108 aa). 3 disulfides stabilise this stretch: C1–C108, C115–C120, and C128–C149. The segment at 53-54 is involved in metalloproteinase-binding; that stretch reads ES. Residues 71-151 are mediates interaction with EFEMP1; sequence GRVYDGKVYT…YQSKHYACIR (81 aa).

Belongs to the protease inhibitor I35 (TIMP) family. Interacts with EFEMP1.

It is found in the secreted. It localises to the extracellular space. Its subcellular location is the extracellular matrix. Functionally, complexes with metalloproteinases (such as collagenases) and irreversibly inactivates them by binding to their catalytic zinc cofactor. May form part of a tissue-specific acute response to remodeling stimuli. The chain is Metalloproteinase inhibitor 3 (TIMP3) from Oryctolagus cuniculus (Rabbit).